The sequence spans 158 residues: 2-C-methyl-D-erythritol 2,4-cyclodiphosphate synthase (158 aa).

Positions 8 and 10 each coordinate a divalent metal cation. 4-CDP-2-C-methyl-D-erythritol 2-phosphate-binding positions include 8–10 and 34–35; these read DVH and HS. A divalent metal cation is bound at residue His42. Residues 56 to 58, 61 to 65, 100 to 106, 132 to 135, Phe139, and Lys142 contribute to the 4-CDP-2-C-methyl-D-erythritol 2-phosphate site; these read DIG, FPDTD, AQKPKML, and TTEE.

It belongs to the IspF family. Homotrimer. A divalent metal cation serves as cofactor.

The catalysed reaction is 4-CDP-2-C-methyl-D-erythritol 2-phosphate = 2-C-methyl-D-erythritol 2,4-cyclic diphosphate + CMP. The protein operates within isoprenoid biosynthesis; isopentenyl diphosphate biosynthesis via DXP pathway; isopentenyl diphosphate from 1-deoxy-D-xylulose 5-phosphate: step 4/6. Functionally, involved in the biosynthesis of isopentenyl diphosphate (IPP) and dimethylallyl diphosphate (DMAPP), two major building blocks of isoprenoid compounds. Catalyzes the conversion of 4-diphosphocytidyl-2-C-methyl-D-erythritol 2-phosphate (CDP-ME2P) to 2-C-methyl-D-erythritol 2,4-cyclodiphosphate (ME-CPP) with a corresponding release of cytidine 5-monophosphate (CMP). This chain is 2-C-methyl-D-erythritol 2,4-cyclodiphosphate synthase, found in Clostridium tetani (strain Massachusetts / E88).